A 196-amino-acid polypeptide reads, in one-letter code: Imidazoleglycerol-phosphate dehydratase (196 aa).

This sequence belongs to the imidazoleglycerol-phosphate dehydratase family.

The protein resides in the cytoplasm. It carries out the reaction D-erythro-1-(imidazol-4-yl)glycerol 3-phosphate = 3-(imidazol-4-yl)-2-oxopropyl phosphate + H2O. It functions in the pathway amino-acid biosynthesis; L-histidine biosynthesis; L-histidine from 5-phospho-alpha-D-ribose 1-diphosphate: step 6/9. In Oleidesulfovibrio alaskensis (strain ATCC BAA-1058 / DSM 17464 / G20) (Desulfovibrio alaskensis), this protein is Imidazoleglycerol-phosphate dehydratase.